Here is a 170-residue protein sequence, read N- to C-terminus: Shikimate kinase (170 aa).

11–16 (GAGKTT) provides a ligand contact to ATP. Mg(2+) is bound at residue Thr-15. Residues Asp-33, Arg-57, and Gly-80 each contribute to the substrate site. Arg-119 provides a ligand contact to ATP. Substrate is bound at residue Arg-141.

The protein belongs to the shikimate kinase family. Monomer. Requires Mg(2+) as cofactor.

The protein localises to the cytoplasm. The catalysed reaction is shikimate + ATP = 3-phosphoshikimate + ADP + H(+). It functions in the pathway metabolic intermediate biosynthesis; chorismate biosynthesis; chorismate from D-erythrose 4-phosphate and phosphoenolpyruvate: step 5/7. Catalyzes the specific phosphorylation of the 3-hydroxyl group of shikimic acid using ATP as a cosubstrate. The sequence is that of Shikimate kinase from Azobacteroides pseudotrichonymphae genomovar. CFP2.